The primary structure comprises 185 residues: Transcription termination/antitermination protein NusG (185 aa).

The region spanning 133–161 (PGEEVRVTEGPFADFNGTVEEVDYEKGRL) is the KOW domain.

This sequence belongs to the NusG family.

Its function is as follows. Participates in transcription elongation, termination and antitermination. This is Transcription termination/antitermination protein NusG from Haemophilus influenzae (strain ATCC 51907 / DSM 11121 / KW20 / Rd).